The sequence spans 616 residues: Dihydroxy-acid dehydratase (616 aa).

Mg(2+) is bound at residue Asp81. Cys122 is a binding site for [2Fe-2S] cluster. Residues Asp123 and Lys124 each contribute to the Mg(2+) site. Lys124 carries the post-translational modification N6-carboxylysine. Cys195 serves as a coordination point for [2Fe-2S] cluster. Glu491 lines the Mg(2+) pocket. Ser517 (proton acceptor) is an active-site residue.

It belongs to the IlvD/Edd family. In terms of assembly, homodimer. The cofactor is [2Fe-2S] cluster. Mg(2+) serves as cofactor.

The catalysed reaction is (2R)-2,3-dihydroxy-3-methylbutanoate = 3-methyl-2-oxobutanoate + H2O. It catalyses the reaction (2R,3R)-2,3-dihydroxy-3-methylpentanoate = (S)-3-methyl-2-oxopentanoate + H2O. The protein operates within amino-acid biosynthesis; L-isoleucine biosynthesis; L-isoleucine from 2-oxobutanoate: step 3/4. It functions in the pathway amino-acid biosynthesis; L-valine biosynthesis; L-valine from pyruvate: step 3/4. In terms of biological role, functions in the biosynthesis of branched-chain amino acids. Catalyzes the dehydration of (2R,3R)-2,3-dihydroxy-3-methylpentanoate (2,3-dihydroxy-3-methylvalerate) into 2-oxo-3-methylpentanoate (2-oxo-3-methylvalerate) and of (2R)-2,3-dihydroxy-3-methylbutanoate (2,3-dihydroxyisovalerate) into 2-oxo-3-methylbutanoate (2-oxoisovalerate), the penultimate precursor to L-isoleucine and L-valine, respectively. In Sodalis glossinidius (strain morsitans), this protein is Dihydroxy-acid dehydratase.